The primary structure comprises 236 residues: Flagellar L-ring protein (236 aa).

The first 16 residues, 1–16, serve as a signal peptide directing secretion; that stretch reads MRMQLTAVLAASLLAG. Cys-17 carries the N-palmitoyl cysteine lipid modification. A lipid anchor (S-diacylglycerol cysteine) is attached at Cys-17.

This sequence belongs to the FlgH family. In terms of assembly, the basal body constitutes a major portion of the flagellar organelle and consists of four rings (L,P,S, and M) mounted on a central rod.

It localises to the cell outer membrane. It is found in the bacterial flagellum basal body. Assembles around the rod to form the L-ring and probably protects the motor/basal body from shearing forces during rotation. The protein is Flagellar L-ring protein of Sinorhizobium fredii (strain NBRC 101917 / NGR234).